The chain runs to 478 residues: Lysosome membrane protein 2 (478 aa).

Topologically, residues 1–4 are cytoplasmic; sequence MGRC. The helical transmembrane segment at 5–27 threads the bilayer; that stretch reads CFYTAGTLSLLLLVTSVTLLVAR. The Lumenal portion of the chain corresponds to 28 to 433; it reads VFQKAVDQTI…QLKSVINTTL (406 aa). N-linked (GlcNAc...) asparagine glycosylation is found at N45, N68, N105, and N122. The segment at 155-191 is important for interaction with GBA1; it reads LIEAMLKAYQQKLFVIHTVHELLWGYKDEILSLVHIF. N206, N224, N249, and N304 each carry an N-linked (GlcNAc...) asparagine glycan. Cystine bridges form between C274-C329 and C312-C318. Residues N325, N412, and N430 are each glycosylated (N-linked (GlcNAc...) asparagine). A helical membrane pass occupies residues 434 to 459; that stretch reads VVTNIPYIIMALGVFFGLVFTWLACR. The Cytoplasmic portion of the chain corresponds to 460–478; sequence GQGSMDEGTADERAPLIRT.

This sequence belongs to the CD36 family. In terms of assembly, interacts with GBA1. In terms of processing, acylated by palmitic acid group(s). Post-translationally, heavily glycosylated. As to expression, detected in the extracts of brain, heart, lung, liver and kidney.

It is found in the lysosome membrane. Functionally, acts as a lysosomal receptor for glucosylceramidase (GBA1) targeting. The polypeptide is Lysosome membrane protein 2 (Scarb2) (Mus musculus (Mouse)).